A 468-amino-acid chain; its full sequence is Na(+)/H(+) antiporter NhaA (468 aa).

10 helical membrane-spanning segments follow: residues 32–52 (FLHI…IALL), 83–103 (LHFW…GMEI), 119–139 (ALPM…YLAI), 148–168 (GWAV…ALLG), 178–198 (FLLA…AVAF), 205–225 (GGFL…WIGV), 320–340 (ALHP…NAGV), 354–374 (GAMF…IVSV), 397–417 (LVGL…TLAF), and 428–448 (LGVL…GFIY).

This sequence belongs to the NhaA Na(+)/H(+) (TC 2.A.33) antiporter family.

The protein localises to the cell inner membrane. It carries out the reaction Na(+)(in) + 2 H(+)(out) = Na(+)(out) + 2 H(+)(in). Its function is as follows. Na(+)/H(+) antiporter that extrudes sodium in exchange for external protons. The polypeptide is Na(+)/H(+) antiporter NhaA (Cupriavidus necator (strain ATCC 17699 / DSM 428 / KCTC 22496 / NCIMB 10442 / H16 / Stanier 337) (Ralstonia eutropha)).